The sequence spans 339 residues: Nitrilase (339 aa).

The CN hydrolase domain maps to 7 to 277 (YRVAAVQASP…EGITYADIDL (271 aa)). Glu-47 serves as the catalytic Proton acceptor. The active-site Proton donor is the Lys-128. Cys-162 serves as the catalytic Nucleophile.

The protein belongs to the carbon-nitrogen hydrolase superfamily. Nitrilase family.

The catalysed reaction is a nitrile + 2 H2O = a carboxylate + NH4(+). In Bacillus sp. (strain OxB-1), this protein is Nitrilase (nit).